A 137-amino-acid polypeptide reads, in one-letter code: Putative pre-16S rRNA nuclease (137 aa).

The protein belongs to the YqgF nuclease family.

Its subcellular location is the cytoplasm. Its function is as follows. Could be a nuclease involved in processing of the 5'-end of pre-16S rRNA. The protein is Putative pre-16S rRNA nuclease of Actinobacillus pleuropneumoniae serotype 7 (strain AP76).